A 438-amino-acid polypeptide reads, in one-letter code: GDP-mannose 6-dehydrogenase (438 aa).

Residues tyrosine 10, valine 11, aspartate 30, lysine 35, threonine 86, and threonine 124 each contribute to the NAD(+) site. 10 residues coordinate GDP-alpha-D-mannuronate: glutamate 161, lysine 210, asparagine 214, histidine 217, asparagine 225, tyrosine 256, tyrosine 257, arginine 259, phenylalanine 262, and glycine 265. Cysteine 268 is a catalytic residue. Lysine 271 contributes to the NAD(+) binding site. A GDP-alpha-D-mannuronate-binding site is contributed by lysine 324. Arginine 331 contributes to the NAD(+) binding site.

Belongs to the UDP-glucose/GDP-mannose dehydrogenase family.

It catalyses the reaction GDP-alpha-D-mannose + 2 NAD(+) + H2O = GDP-alpha-D-mannuronate + 2 NADH + 3 H(+). The protein operates within glycan biosynthesis; alginate biosynthesis. Catalyzes the oxidation of guanosine diphospho-D-mannose (GDP-D-mannose) to GDP-D-mannuronic acid, a precursor for alginate polymerization. The alginate layer causes a mucoid phenotype and provides a protective barrier against host immune defenses and antibiotics. This Pseudomonas syringae pv. syringae protein is GDP-mannose 6-dehydrogenase (algD).